The chain runs to 342 residues: A-type ATP synthase subunit C (342 aa).

This sequence belongs to the V-ATPase V0D/AC39 subunit family. Has multiple subunits with at least A(3), B(3), C, D, E, F, H, I and proteolipid K(x).

It localises to the cell membrane. Functionally, component of the A-type ATP synthase that produces ATP from ADP in the presence of a proton gradient across the membrane. In Archaeoglobus fulgidus (strain ATCC 49558 / DSM 4304 / JCM 9628 / NBRC 100126 / VC-16), this protein is A-type ATP synthase subunit C.